The following is a 765-amino-acid chain: Kinesin-like protein KIN-14S (765 aa).

The Kinesin motor domain occupies 132–456 (NIRVFCRCRP…LNFASRVRGI (325 aa)). Residue 215–222 (GQTGTGKT) coordinates ATP. Positions 469 to 534 (ELLKSKQMAE…ERKTRIKQES (66 aa)) form a coiled coil. Disordered regions lie at residues 581–613 (MPQQQPSQGHSKRFSDTTFKENNNSNRRSSSMD) and 654–678 (LRPEPSSLSSMETPSRPPPSFRGDP). Residues 602-611 (NNNSNRRSSS) are compositionally biased toward low complexity.

The protein belongs to the TRAFAC class myosin-kinesin ATPase superfamily. Kinesin family. KIN-14 subfamily.

This is Kinesin-like protein KIN-14S from Arabidopsis thaliana (Mouse-ear cress).